A 283-amino-acid chain; its full sequence is RNase adapter protein RapZ (283 aa).

8 to 15 (GRSGSGKS) is a binding site for ATP. 56–59 (DVRN) is a binding site for GTP. The segment at 266-283 (RARGKNVQSRHRTLEKRK) is RNA-binding.

Belongs to the RapZ-like family. RapZ subfamily. Homotrimer.

Functionally, modulates the synthesis of GlmS, by affecting the processing and stability of the regulatory small RNA GlmZ. When glucosamine-6-phosphate (GlcN6P) concentrations are high in the cell, RapZ binds GlmZ and targets it to cleavage by RNase E. Consequently, GlmZ is inactivated and unable to activate GlmS synthesis. Under low GlcN6P concentrations, RapZ is sequestered and inactivated by an other regulatory small RNA, GlmY, preventing GlmZ degradation and leading to synthesis of GlmS. This Yersinia enterocolitica serotype O:8 / biotype 1B (strain NCTC 13174 / 8081) protein is RNase adapter protein RapZ.